The primary structure comprises 919 residues: Tight junction protein ZO-3 (919 aa).

The 83-residue stretch at Thr-11–Arg-93 folds into the PDZ 1 domain. The tract at residues Pro-92–Gly-173 is disordered. Residue Ser-112 is modified to Phosphoserine. The segment covering Gly-117–Asp-131 has biased composition (basic and acidic residues). At Ser-136 the chain carries Phosphoserine. Over residues Arg-147–Arg-163 the composition is skewed to basic residues. Residues Ser-164, Ser-169, Ser-203, and Ser-319 each carry the phosphoserine modification. Residues Ser-195–Arg-272 enclose the PDZ 2 domain. Residues Ile-279–Tyr-377 are disordered. A Phosphothreonine modification is found at Thr-325. Ser-327 carries the post-translational modification Phosphoserine. Residues Pro-332–Ser-360 are compositionally biased toward basic and acidic residues. The residue at position 371 (Ser-371) is a Phosphoserine. One can recognise a PDZ 3 domain in the interval Asp-380 to Leu-446. One can recognise an SH3 domain in the interval Gly-475–Ala-549. A Guanylate kinase-like domain is found at Leu-580–Arg-761. The residue at position 591 (Ser-591) is a Phosphoserine. A compositionally biased stretch (low complexity) spans Ala-791–Ser-801. Disordered stretches follow at residues Ala-791–Arg-886 and Arg-899–Leu-919. Over residues Glu-812–Gly-828 the composition is skewed to gly residues. 3 positions are modified to phosphoserine: Ser-856, Ser-905, and Ser-906.

The protein belongs to the MAGUK family. Interacts with occludin OCLN, claudins and TPJ1. Interacts with PATJ. Interacts with UBN1. Interacts with FASLG. Interacts with CCND1. Phosphorylated.

The protein resides in the cell membrane. Its subcellular location is the cell junction. It is found in the tight junction. It localises to the nucleus. TJP1, TJP2, and TJP3 are closely related scaffolding proteins that link tight junction (TJ) transmembrane proteins such as claudins, junctional adhesion molecules, and occludin to the actin cytoskeleton. The tight junction acts to limit movement of substances through the paracellular space and as a boundary between the compositionally distinct apical and basolateral plasma membrane domains of epithelial and endothelial cells. Binds and recruits PATJ to tight junctions where it connects and stabilizes apical and lateral components of tight junctions. Promotes cell-cycle progression through the sequestration of cyclin D1 (CCND1) at tight junctions during mitosis which prevents CCND1 degradation during M-phase and enables S-phase transition. With TJP1 and TJP2, participates in the junctional retention and stability of the transcription factor DBPA, but is not involved in its shuttling to the nucleus. Contrary to TJP2, TJP3 is dispensable for individual viability, embryonic development, epithelial differentiation, and the establishment of TJs, at least in the laboratory environment. This is Tight junction protein ZO-3 (TJP3) from Homo sapiens (Human).